Consider the following 416-residue polypeptide: MDVIVRKGEIRGKAKPPASKSYTHRAFIAASLSPSARVVNPLISEDTISTLNACKRIGAAVLKKGNEWLFSGVDGVEAEGYFNFANSGTTLRIFTGLLSLSPFRSVVDGDESLRKRPNGELVLALSKLGARFKGREPYTPPFSVQGVIKGGEVEIEAPSSQFVSSLLFALSLAEGDSSLRVEKVKSQPYIDVTLDVLRESGVKVEREGNFYHIPGSQSFKLRRYDVPADFSSASYLIAAGLIAGEVVLEGMFESAQGDRKIVDICREMGGSVEWDKKRGVIRAERSELEGVEVDASDIPDLVPTIAVLAAVAKGKTRIYNAEHLRIKEIDRIEGIHQNLKALGVESKPLKDGLIIKGGKGEFRGVVDSFGDHRMALAFSLLGLLGEVKCRNAEVVSVSFPGYFRVLESLGASVIRL.

3 residues coordinate 3-phosphoshikimate: lysine 20, serine 21, and arginine 25. Residue lysine 20 participates in phosphoenolpyruvate binding. 2 residues coordinate phosphoenolpyruvate: glycine 88 and arginine 116. The 3-phosphoshikimate site is built by serine 159, serine 160, glutamine 161, serine 186, aspartate 300, and lysine 327. Residue glutamine 161 participates in phosphoenolpyruvate binding. The active-site Proton acceptor is aspartate 300. Positions 331 and 373 each coordinate phosphoenolpyruvate.

Belongs to the EPSP synthase family. In terms of assembly, monomer.

It is found in the cytoplasm. The catalysed reaction is 3-phosphoshikimate + phosphoenolpyruvate = 5-O-(1-carboxyvinyl)-3-phosphoshikimate + phosphate. It functions in the pathway metabolic intermediate biosynthesis; chorismate biosynthesis. Functionally, catalyzes the transfer of the enolpyruvyl moiety of phosphoenolpyruvate (PEP) to the 5-hydroxyl of shikimate-3-phosphate (S3P) to produce enolpyruvyl shikimate-3-phosphate and inorganic phosphate. The sequence is that of 3-phosphoshikimate 1-carboxyvinyltransferase from Archaeoglobus fulgidus (strain ATCC 49558 / DSM 4304 / JCM 9628 / NBRC 100126 / VC-16).